We begin with the raw amino-acid sequence, 114 residues long: MNVLLGGFVIFATFVTLCNASCSFIPNERFPGDSTRECTDLKGNKHPINSKWKTDNCERCTCYKTEIICCTLIATPVGYDKKKCQRIFKKEDCKYIVVEKKNPKKTCPIDQWIL.

Residues 1–20 (MNVLLGGFVIFATFVTLCNA) form the signal peptide. 5 cysteine pairs are disulfide-bonded: Cys-22/Cys-70, Cys-38/Cys-62, Cys-57/Cys-93, Cys-60/Cys-69, and Cys-84/Cys-107.

The protein belongs to the beta-microseminoprotein family. As to quaternary structure, homodimer; Interacts with PI16.

It is found in the secreted. The protein is Beta-microseminoprotein (MSMB) of Macaca mulatta (Rhesus macaque).